The primary structure comprises 286 residues: Energy-coupling factor transporter ATP-binding protein EcfA2 (286 aa).

The ABC transporter domain occupies 3-246 (IRFDNVSYTY…KKKLADWHIG (244 aa)). 40–47 (GQTGSGKS) contributes to the ATP binding site.

The protein belongs to the ABC transporter superfamily. Energy-coupling factor EcfA family. As to quaternary structure, forms a stable energy-coupling factor (ECF) transporter complex composed of 2 membrane-embedded substrate-binding proteins (S component), 2 ATP-binding proteins (A component) and 2 transmembrane proteins (T component).

It is found in the cell membrane. In terms of biological role, ATP-binding (A) component of a common energy-coupling factor (ECF) ABC-transporter complex. Unlike classic ABC transporters this ECF transporter provides the energy necessary to transport a number of different substrates. The sequence is that of Energy-coupling factor transporter ATP-binding protein EcfA2 from Staphylococcus aureus (strain USA300).